We begin with the raw amino-acid sequence, 366 residues long: DNA replication and repair protein RecF (366 aa).

30-37 (GRNAQGKT) is a binding site for ATP.

This sequence belongs to the RecF family.

It is found in the cytoplasm. Its function is as follows. The RecF protein is involved in DNA metabolism; it is required for DNA replication and normal SOS inducibility. RecF binds preferentially to single-stranded, linear DNA. It also seems to bind ATP. The sequence is that of DNA replication and repair protein RecF from Streptococcus thermophilus (strain ATCC BAA-250 / LMG 18311).